Reading from the N-terminus, the 936-residue chain is Protocadherin gamma-A10 (936 aa).

Residues 1–32 form the signal peptide; the sequence is MAAQRNRSKESKDCSGLVLLCLFFGIPWEAGA. Cadherin domains follow at residues 33–137, 138–246, 247–351, 352–456, 457–566, and 574–687; these read RQIS…APKF, QAEN…APVF, TLPE…SPEL, TITS…PPTF, SQVS…APEI, and DGST…SPAN. Over 33-696 the chain is Extracellular; that stretch reads RQISYSIPEE…NSETSDLTLY (664 aa). An N-linked (GlcNAc...) asparagine glycan is attached at asparagine 51. Residues asparagine 423 and asparagine 549 are each glycosylated (N-linked (GlcNAc...) asparagine). A helical transmembrane segment spans residues 697-717; sequence LVVAVAAVSCVFLAFVIVLLA. Over 718–936 the chain is Cytoplasmic; sequence HRLRRWHKSR…KKKSGKKEKK (219 aa). Disordered stretches follow at residues 806 to 845 and 906 to 936; these read EDTPLVPQAPPNTDWRFSQAQRPGTSGSQNGDDTGTWPNN and ATLTNAAGKRDGKAPAGGNGNKKKSGKKEKK. Over residues 820–845 the composition is skewed to polar residues; that stretch reads WRFSQAQRPGTSGSQNGDDTGTWPNN. Residues 926–936 show a composition bias toward basic residues; the sequence is NKKKSGKKEKK.

It is found in the cell membrane. Functionally, potential calcium-dependent cell-adhesion protein. May be involved in the establishment and maintenance of specific neuronal connections in the brain. In Homo sapiens (Human), this protein is Protocadherin gamma-A10 (PCDHGA10).